Consider the following 190-residue polypeptide: MLYLASRSPRRQELLQRLDVPFQTLQLDVPELRAADESPDQYVQRVALEKAHAGLALVQAADPDAIVLGSDTEVVLGERVFGKPVDVDDAIAMLRELSGRTHQVLTAVVLVCAQRAPARALVVSEVAFDTLDDAQIAAYAACGEPMGKAGAYAIQGRAERFIRHLSGSYSGVMGLPLYHTSQLLTAFGAH.

Residue Asp-71 is the Proton acceptor of the active site.

The protein belongs to the Maf family. YhdE subfamily. It depends on a divalent metal cation as a cofactor.

The protein resides in the cytoplasm. The enzyme catalyses dTTP + H2O = dTMP + diphosphate + H(+). It catalyses the reaction UTP + H2O = UMP + diphosphate + H(+). In terms of biological role, nucleoside triphosphate pyrophosphatase that hydrolyzes dTTP and UTP. May have a dual role in cell division arrest and in preventing the incorporation of modified nucleotides into cellular nucleic acids. This is dTTP/UTP pyrophosphatase from Xanthomonas axonopodis pv. citri (strain 306).